Consider the following 325-residue polypeptide: ATP synthase gamma chain (325 aa).

Belongs to the ATPase gamma chain family. As to quaternary structure, F-type ATPases have 2 components, CF(1) - the catalytic core - and CF(0) - the membrane proton channel. CF(1) has five subunits: alpha(3), beta(3), gamma(1), delta(1), epsilon(1). CF(0) has three main subunits: a, b and c.

The protein localises to the cell membrane. In terms of biological role, produces ATP from ADP in the presence of a proton gradient across the membrane. The gamma chain is believed to be important in regulating ATPase activity and the flow of protons through the CF(0) complex. This Corynebacterium glutamicum (strain ATCC 13032 / DSM 20300 / JCM 1318 / BCRC 11384 / CCUG 27702 / LMG 3730 / NBRC 12168 / NCIMB 10025 / NRRL B-2784 / 534) protein is ATP synthase gamma chain.